The chain runs to 512 residues: Maturase K (512 aa).

The protein belongs to the intron maturase 2 family. MatK subfamily.

It is found in the plastid. Its subcellular location is the chloroplast. Functionally, usually encoded in the trnK tRNA gene intron. Probably assists in splicing its own and other chloroplast group II introns. This Lemna minor (Common duckweed) protein is Maturase K.